Reading from the N-terminus, the 809-residue chain is Poly(A) polymerase (809 aa).

Residues 1-50 are disordered; sequence MNKNGGPPVANITTSSTTITSTTTTQAKSQLPSSLSVNNLHTTQGSTDQP. Low complexity predominate over residues 12 to 25; that stretch reads ITTSSTTITSTTTT. Residues 26–50 are compositionally biased toward polar residues; the sequence is QAKSQLPSSLSVNNLHTTQGSTDQP. ATP is bound by residues 133-135, 146-148, aspartate 200, lysine 262, tyrosine 271, and 280-281; these read FGS, DID, and GV. Mg(2+) is bound by residues aspartate 146, aspartate 148, and aspartate 200. Disordered regions lie at residues 529–760 and 785–809; these read FVKD…QQIQ and ISSS…IRGN. A compositionally biased stretch (basic and acidic residues) spans 530-540; the sequence is VKDEGPEEPVK. The span at 572–655 shows a compositional bias: low complexity; it reads SPITTNINST…TPPTTTTINS (84 aa). Residues 656–665 are compositionally biased toward polar residues; that stretch reads VQPPSAQPTE. Low complexity predominate over residues 666-706; it reads NGSSTSNSPTSTSINNTALPPNPTTNSESTIETTITLPTTL. The span at 707–735 shows a compositional bias: polar residues; the sequence is ESQTSTLKDSNEISTNGTAVATEPTITSP. Composition is skewed to low complexity over residues 736–760 and 785–794; these read SVNI…QQIQ and ISSSSETSQS.

Belongs to the poly(A) polymerase family. The cofactor is Mg(2+). Mn(2+) serves as cofactor.

It is found in the nucleus. The enzyme catalyses RNA(n) + ATP = RNA(n)-3'-adenine ribonucleotide + diphosphate. Polymerase that creates the 3'-poly(A) tail of mRNA's. May acquire specificity through interaction with a cleavage and polyadenylation factor. The polypeptide is Poly(A) polymerase (papA) (Dictyostelium discoideum (Social amoeba)).